The following is a 389-amino-acid chain: MKFVDEAVIRVEAGDGGSGCVSFRREKYVPDGGPDGGDGGDGGSVFLQADENFNTLIEFRFERFHMAERGENGRGRDCTGHSGKDLILKVPVGTRAVDHDTEEVLGDLTTHGQKLLVAKGGFHGLGNTRFKSSTNRAPRQKTLGTPGEVRSLKLELLLLADVGLLGMPNAGKSTFIRAVSRATPKVADYPFTTLVPNLGVVNPRPGQSFVIADIPGLIEGAADGAGLGIRFLKHLERCRILLHIIDIEPIDGTDPVESARAIVGELEKYSPKLASKPRWLVFNKTDLLLEEELQQKVDRIVKEMGWEGDVYTISAYNRDGTNELALKLLDYIASLPPEDNEIDPDSEVEFKWDNYHQANLDSVNEDYVDEDDDDDFDDDDYDVEVIYQR.

The Obg domain maps to 1-159; that stretch reads MKFVDEAVIR…RSLKLELLLL (159 aa). The OBG-type G domain maps to 160-333; it reads ADVGLLGMPN…LALKLLDYIA (174 aa). Residues 166-173, 191-195, 213-216, 283-286, and 314-316 each bind GTP; these read GMPNAGKS, FTTLV, DIPG, NKTD, and SAY. Mg(2+) contacts are provided by S173 and T193.

Belongs to the TRAFAC class OBG-HflX-like GTPase superfamily. OBG GTPase family. As to quaternary structure, monomer. Mg(2+) serves as cofactor.

Its subcellular location is the cytoplasm. In terms of biological role, an essential GTPase which binds GTP, GDP and possibly (p)ppGpp with moderate affinity, with high nucleotide exchange rates and a fairly low GTP hydrolysis rate. Plays a role in control of the cell cycle, stress response, ribosome biogenesis and in those bacteria that undergo differentiation, in morphogenesis control. This Shewanella baltica (strain OS223) protein is GTPase Obg.